The sequence spans 1826 residues: 1,3-beta-glucan synthase component bgs3 (1826 aa).

Polar residues predominate over residues 34–43 (QSNDQYNNIQ). The disordered stretch occupies residues 34–90 (QSNDQYNNIQHPAPSFANPFIHEQDDSYSDILEEEPDEDAYDSPERPSSTEEFISQD). Residues 59–75 (DSYSDILEEEPDEDAYD) are compositionally biased toward acidic residues. The next 7 helical transmembrane spans lie at 427–447 (IWIL…PTIY), 465–485 (WCAP…ALIL), 504–524 (LIFV…IFGF), 543–563 (FFFS…FLLG), 597–617 (AALW…FLTL), 637–657 (FMIG…LVYL), and 660–680 (LVLF…MFSI). Ser885 carries the phosphoserine modification. 11 helical membrane-spanning segments follow: residues 1272–1292 (VFIM…GAMY), 1329–1349 (IISI…HDLL), 1375–1397 (VTQN…YIAT), 1417–1437 (GSSI…TMTV), 1438–1458 (WTTH…CPFI), 1531–1551 (IFTE…AYTF), 1571–1591 (IWIM…ILLM), 1607–1627 (YGAV…VFTF), 1642–1662 (VLGC…VVVF), 1701–1721 (CKVV…CILF), and 1770–1790 (SLLF…PLVL).

It belongs to the glycosyltransferase 48 family. In terms of assembly, component of the 1,3-beta-glucan synthase (GS) complex, composed of at least the alternate catalytic subunits bgs1, bgs2, bgs3, and bgs4, and a regulatory subunit chr4.

Its subcellular location is the membrane. The enzyme catalyses [(1-&gt;3)-beta-D-glucosyl](n) + UDP-alpha-D-glucose = [(1-&gt;3)-beta-D-glucosyl](n+1) + UDP + H(+). Its function is as follows. Alternate catalytic subunit of the 1,3-beta-glucan synthase (GS) complex. Synthesizes 1,3-beta-glucan, a major structural component of the yeast cell wall. Required for cell wall biosynthesis and cell elongation. The chain is 1,3-beta-glucan synthase component bgs3 from Schizosaccharomyces pombe (strain 972 / ATCC 24843) (Fission yeast).